Here is a 115-residue protein sequence, read N- to C-terminus: Large ribosomal subunit protein bL20 (115 aa).

It belongs to the bacterial ribosomal protein bL20 family.

Its function is as follows. Binds directly to 23S ribosomal RNA and is necessary for the in vitro assembly process of the 50S ribosomal subunit. It is not involved in the protein synthesizing functions of that subunit. This Microcystis aeruginosa (strain NIES-843 / IAM M-2473) protein is Large ribosomal subunit protein bL20.